We begin with the raw amino-acid sequence, 310 residues long: Terpene synthase 6 (310 aa).

A DDxx(x)D/E motif motif is present at residues 93–98 (DDFYFE). The NDxxSxxxD/E motif signature appears at 222–230 (NDCYSFNKE).

It belongs to the terpene synthase family.

The catalysed reaction is (2E,6E)-farnesyl diphosphate = (E)-beta-farnesene + diphosphate. It catalyses the reaction (2E,6E)-farnesyl diphosphate = (1S,2S,4R)-beta-elemene + diphosphate. The enzyme catalyses (2E,6E)-farnesyl diphosphate = (3E,6E)-alpha-farnesene + diphosphate. Functionally, terpene synthase that converts its substrate farnesyl diphosphate (FPP) into the sesquiterpenes beta-elemene, (E)-beta-farnesene and (E,E)-alpha-farnesene. In Dictyostelium purpureum (Slime mold), this protein is Terpene synthase 6.